We begin with the raw amino-acid sequence, 321 residues long: Tet-like dioxygenase 1 (321 aa).

Residues 198–298 (DSYYALNNCL…RIGLVYFAHK (101 aa)) enclose the Fe2OG dioxygenase domain. Asparagine 214 and arginine 224 together coordinate 2-oxoglutarate. Fe cation is bound by residues histidine 229 and aspartate 231. 2-oxoglutarate is bound at residue tyrosine 242. Residue histidine 279 participates in Fe cation binding. Residue arginine 289 participates in 2-oxoglutarate binding. Glutamine 310 contacts substrate.

Requires Fe(2+) as cofactor.

It catalyses the reaction a 5-methyl-2'-deoxycytidine in DNA + 2-oxoglutarate + O2 = a 5-hydroxymethyl-2'-deoxycytidine in DNA + succinate + CO2. It carries out the reaction a 5-hydroxymethyl-2'-deoxycytidine in DNA + 2-oxoglutarate + O2 = a 5-formyl-2'-deoxycytidine in DNA + succinate + CO2 + H2O. The catalysed reaction is a 5-formyl-2'-deoxycytidine in DNA + 2-oxoglutarate + O2 = a 5-carboxyl-2'-deoxycytidine in DNA + succinate + CO2 + H(+). Dioxygenase that catalyzes the conversion of the modified genomic base 5-methylcytosine (5mC) into 5-hydroxymethylcytosine (5hmC), and thereby plays a role in active DNA demethylation. Also mediates subsequent conversion of 5hmC into 5-formylcytosine (5fC), and conversion of 5fC to 5-carboxylcytosine (5caC). This is Tet-like dioxygenase 1 from Naegleria gruberi (Amoeba).